The sequence spans 215 residues: Imidazole glycerol phosphate synthase subunit HisH (215 aa).

The Glutamine amidotransferase type-1 domain maps to 3 to 215; the sequence is TAVVFDYGFG…QLLKNWIATL (213 aa). Residue cysteine 81 is the Nucleophile of the active site. Residues histidine 196 and glutamate 198 contribute to the active site.

As to quaternary structure, heterodimer of HisH and HisF.

The protein resides in the cytoplasm. The enzyme catalyses 5-[(5-phospho-1-deoxy-D-ribulos-1-ylimino)methylamino]-1-(5-phospho-beta-D-ribosyl)imidazole-4-carboxamide + L-glutamine = D-erythro-1-(imidazol-4-yl)glycerol 3-phosphate + 5-amino-1-(5-phospho-beta-D-ribosyl)imidazole-4-carboxamide + L-glutamate + H(+). The catalysed reaction is L-glutamine + H2O = L-glutamate + NH4(+). The protein operates within amino-acid biosynthesis; L-histidine biosynthesis; L-histidine from 5-phospho-alpha-D-ribose 1-diphosphate: step 5/9. In terms of biological role, IGPS catalyzes the conversion of PRFAR and glutamine to IGP, AICAR and glutamate. The HisH subunit catalyzes the hydrolysis of glutamine to glutamate and ammonia as part of the synthesis of IGP and AICAR. The resulting ammonia molecule is channeled to the active site of HisF. This is Imidazole glycerol phosphate synthase subunit HisH from Bifidobacterium longum (strain NCC 2705).